The sequence spans 91 residues: MNQVKYPVLTEKTIRLLEKNQYSFDVNIDSNKTQIKKWIELFFNVKVISVNSHRLPKKKKKIGTTTGYTVRYKRMIIKLQSGYSIPLFSNK.

The protein belongs to the universal ribosomal protein uL23 family. Part of the 50S ribosomal subunit.

It localises to the plastid. The protein localises to the chloroplast. In terms of biological role, binds to 23S rRNA. The sequence is that of Large ribosomal subunit protein uL23c (rpl23) from Marchantia polymorpha (Common liverwort).